The following is a 476-amino-acid chain: Lactate utilization protein B (476 aa).

4Fe-4S ferredoxin-type domains lie at 304-334 (GTEF…GHSY) and 353-382 (YDEY…LHEL). [4Fe-4S] cluster is bound by residues Cys-313, Cys-316, Cys-319, Cys-323, Cys-366, Cys-369, and Cys-373.

The protein belongs to the LutB/YkgF family.

In terms of biological role, is involved in L-lactate degradation and allows cells to grow with lactate as the sole carbon source. Has probably a role as an electron transporter during oxidation of L-lactate. The polypeptide is Lactate utilization protein B (Bacillus velezensis (strain DSM 23117 / BGSC 10A6 / LMG 26770 / FZB42) (Bacillus amyloliquefaciens subsp. plantarum)).